Consider the following 77-residue polypeptide: Acyl carrier protein (77 aa).

The Carrier domain maps to 1–76 (MSIEERVKKI…SAIDYVTKAN (76 aa)). Ser36 is modified (O-(pantetheine 4'-phosphoryl)serine).

The protein belongs to the acyl carrier protein (ACP) family. 4'-phosphopantetheine is transferred from CoA to a specific serine of apo-ACP by AcpS. This modification is essential for activity because fatty acids are bound in thioester linkage to the sulfhydryl of the prosthetic group.

It localises to the cytoplasm. The protein operates within lipid metabolism; fatty acid biosynthesis. Its function is as follows. Carrier of the growing fatty acid chain in fatty acid biosynthesis. The polypeptide is Acyl carrier protein (Actinobacillus pleuropneumoniae serotype 5b (strain L20)).